A 145-amino-acid polypeptide reads, in one-letter code: Basic phospholipase A2 S2-22 (145 aa).

A signal peptide spans 1 to 19 (MYPAHLLVLLAVCVSLLGA). Positions 20–27 (SDIPPQPL) are excised as a propeptide. 7 cysteine pairs are disulfide-bonded: C38–C99, C54–C144, C56–C72, C71–C127, C78–C120, C88–C113, and C106–C118. 3 residues coordinate Ca(2+): Y55, G57, and G59. The active site involves H75. A Ca(2+)-binding site is contributed by D76. D121 is an active-site residue.

This sequence belongs to the phospholipase A2 family. Group I subfamily. D49 sub-subfamily. The cofactor is Ca(2+). In terms of tissue distribution, expressed by the venom gland.

The protein localises to the secreted. The enzyme catalyses a 1,2-diacyl-sn-glycero-3-phosphocholine + H2O = a 1-acyl-sn-glycero-3-phosphocholine + a fatty acid + H(+). In terms of biological role, snake venom phospholipase A2 (PLA2) that inhibits collagen-induced platelet aggregation. PLA2 catalyzes the calcium-dependent hydrolysis of the 2-acyl groups in 3-sn-phosphoglycerides. In Austrelaps superbus (Lowland copperhead snake), this protein is Basic phospholipase A2 S2-22.